Consider the following 61-residue polypeptide: Small ribosomal subunit protein uS14B (61 aa).

Zn(2+) is bound by residues Cys-24, Cys-27, Cys-40, and Cys-43.

The protein belongs to the universal ribosomal protein uS14 family. Zinc-binding uS14 subfamily. In terms of assembly, part of the 30S ribosomal subunit. Contacts proteins S3 and S10. Zn(2+) serves as cofactor.

Its function is as follows. Binds 16S rRNA, required for the assembly of 30S particles and may also be responsible for determining the conformation of the 16S rRNA at the A site. In Bacillus licheniformis (strain ATCC 14580 / DSM 13 / JCM 2505 / CCUG 7422 / NBRC 12200 / NCIMB 9375 / NCTC 10341 / NRRL NRS-1264 / Gibson 46), this protein is Small ribosomal subunit protein uS14B.